Here is a 219-residue protein sequence, read N- to C-terminus: Ribose-5-phosphate isomerase A (219 aa).

Substrate is bound by residues 28-31, 81-84, and 94-97; these read TGST, DGAD, and KGGG. Glu-103 acts as the Proton acceptor in catalysis. Lys-121 contacts substrate.

This sequence belongs to the ribose 5-phosphate isomerase family. In terms of assembly, homodimer.

The enzyme catalyses aldehydo-D-ribose 5-phosphate = D-ribulose 5-phosphate. The protein operates within carbohydrate degradation; pentose phosphate pathway; D-ribose 5-phosphate from D-ribulose 5-phosphate (non-oxidative stage): step 1/1. Catalyzes the reversible conversion of ribose-5-phosphate to ribulose 5-phosphate. This Acidithiobacillus ferrooxidans (strain ATCC 23270 / DSM 14882 / CIP 104768 / NCIMB 8455) (Ferrobacillus ferrooxidans (strain ATCC 23270)) protein is Ribose-5-phosphate isomerase A.